The sequence spans 220 residues: A-type ATP synthase subunit K (220 aa).

6 consecutive transmembrane segments (helical) span residues 5 to 25, 63 to 83, 90 to 110, 125 to 145, 155 to 175, and 195 to 215; these read LILGAVGAGLAVGIAGLGSGI, FLVAILILFVFKTVSPWAMFA, LAGLSAIGQGIAASAGLGAVA, LPETQAIYGLLIAILLLVGVF, AALGAGFAVGFAGLSGIGQGI, and LVLAVMPETFAIFGLLIAILI.

Belongs to the V-ATPase proteolipid subunit family. The A-type ATPase is composed of subunits A(3), B(3), C, D, E(1 or 2), F, H(2), I and K(x). Subunit K dimerizes and may form higher oligomers.

It localises to the cell membrane. Functionally, component of the A-type ATP synthase that produces ATP from ADP in the presence of a proton gradient across the membrane. The protein is A-type ATP synthase subunit K of Methanocaldococcus jannaschii (strain ATCC 43067 / DSM 2661 / JAL-1 / JCM 10045 / NBRC 100440) (Methanococcus jannaschii).